A 566-amino-acid chain; its full sequence is DNA ligase B (566 aa).

Lys125 acts as the N6-AMP-lysine intermediate in catalysis.

This sequence belongs to the NAD-dependent DNA ligase family. LigB subfamily.

It catalyses the reaction NAD(+) + (deoxyribonucleotide)n-3'-hydroxyl + 5'-phospho-(deoxyribonucleotide)m = (deoxyribonucleotide)n+m + AMP + beta-nicotinamide D-nucleotide.. In terms of biological role, catalyzes the formation of phosphodiester linkages between 5'-phosphoryl and 3'-hydroxyl groups in double-stranded DNA using NAD as a coenzyme and as the energy source for the reaction. This chain is DNA ligase B, found in Pseudomonas putida (strain ATCC 47054 / DSM 6125 / CFBP 8728 / NCIMB 11950 / KT2440).